The sequence spans 1372 residues: Paired amphipathic helix protein Sin3-like 1 (1372 aa).

The segment at 1–50 is disordered; the sequence is MKRIRDDVYASGSQFRRPLGSSRGQLCGQSPVHGSGDTEEEEEGGSRRVS. PAH domains are found at residues 51–121 and 136–206; these read QKLT…LPKG and KTVE…LPAS. Over residues 210–222 the composition is skewed to low complexity; that stretch reads HSAAQHSRSQAQQ. Disordered stretches follow at residues 210–244 and 272–323; these read HSAAQHSRSQAQQYSDRGSDPPLLHQMQVEKERRR and REQR…SGSA. A compositionally biased stretch (basic and acidic residues) spans 272–315; it reads REQRKRLDKENRARRGRDLDDREAGQDNLHHFPEKRKSSRRAEA. The region spanning 331–400 is the PAH 3 domain; it reads LKSMYKQAFV…DEFNQFFERC (70 aa). Disordered stretches follow at residues 764–783, 791–817, and 934–1056; these read DVNHSTSPNGEAAVSSGGDT, LKSAANGDENSSSGTFKHGIGLLNKDS, and GLRS…AEGM. Over residues 938–957 the composition is skewed to basic and acidic residues; the sequence is DSSKGTRNSDDPEGPSRNEK. 2 stretches are compositionally biased toward acidic residues: residues 990-1013 and 1028-1042; these read AEAEVEADAEVENEDDADDVDSEN and SQDEDREEENGEHDE. At S1049 the chain carries Phosphoserine.

As to quaternary structure, interacts (via PAH3) with ALY2. Interacts (via PAH2) with TBP1. Interacts with ALY3, GATA21, TRP2, TKI1, VAL1, SKP1B, FBX5 and PUB14.

The protein resides in the nucleus. In terms of biological role, acts as a transcriptional repressor. A histone deacetylase (HDAC) activity is required for transcription repression. May play a role in telomere stability. The sequence is that of Paired amphipathic helix protein Sin3-like 1 (SNL1) from Arabidopsis thaliana (Mouse-ear cress).